The sequence spans 49 residues: GIDPNYRTSRQVVGEHQGHKVYGPVDPPKVLGIHGTIVXVDFDLCIADG.

An N-terminal extension region spans residues 1 to 36; that stretch reads GIDPNYRTSRQVVGEHQGHKVYGPVDPPKVLGIHGT. Residues His16 and His19 each coordinate Zn(2+). The residue at position 29 (Lys29) is an N6-methyllysine. Position 34 (His34) interacts with Zn(2+). The segment at 37-49 is ferredoxin; the sequence is IVXVDFDLCIADG. Cys45 provides a ligand contact to [3Fe-4S] cluster.

Requires [3Fe-4S] cluster as cofactor. It depends on [4Fe-4S] cluster as a cofactor. Zn(2+) serves as cofactor.

Functionally, ferredoxins are iron-sulfur proteins that transfer electrons in a wide variety of metabolic reactions. This chain is Zinc-containing ferredoxin (zfx), found in Acidianus infernus.